Reading from the N-terminus, the 373-residue chain is 3-isopropylmalate dehydrogenase AMT6 (373 aa).

77–79 (VGG) serves as a coordination point for NADP(+). Positions 97 and 136 each coordinate substrate. Positions 227, 252, and 256 each coordinate Mg(2+). Residue 284–289 (SRIRGL) coordinates NADP(+).

It belongs to the isocitrate and isopropylmalate dehydrogenases family. Homodimer. The cofactor is Mg(2+). It depends on Mn(2+) as a cofactor.

It catalyses the reaction (2R,3S)-3-isopropylmalate + NAD(+) = 4-methyl-2-oxopentanoate + CO2 + NADH. The protein operates within amino-acid biosynthesis; L-leucine biosynthesis; L-leucine from 3-methyl-2-oxobutanoate: step 3/4. Its pathway is mycotoxin biosynthesis. Its function is as follows. 3-isopropylmalate dehydrogenase; part of the gene clusters that mediate the biosynthesis of AM-toxins, host-selective toxins (HSTs) causing Alternaria blotch on apple, a worldwide distributed disease. AM-toxins are cyclic depsipeptides containing the 3 residues 2-hydroxy-isovaleric acid (2-HIV), dehydroalanine, L-alanine which are common for all 3 AM-toxins I to III. The fourth precursor is L-alpha-amino-methoxyphenyl-valeric acid (L-Amv) for AM-toxin I, L-alpha-amino-phenyl-valeric acid (L-Apv) for AM-toxin II, and L-alpha-amino-hydroxyphenyl-valeric acid (L-Ahv) for AM-toxin III. AM-toxins have two target sites for affecting susceptible apple cells; they cause invagination of the plasma membrane and electrolyte loss and chloroplast disorganization. The non-ribosomal peptide synthetase AMT1 contains 4 catalytic modules and is responsible for activation of each residue in AM-toxin. The aldo-keto reductase AMT2 catalyzes the conversion of 2-keto-isovaleric acid (2-KIV) to 2-hydroxy-isovaleric acid (2-HIV), one of the precursor residues incorporated by AMT1 during AM-toxin biosynthesis, by reduction of its ketone to an alcohol. The cytochrome P450 monooxygenase AMT3 and the thioesterase AMT4 are also important for AM-toxin production, but their exact function within the AM-toxin biosynthesis are not known yet. Up to 21 proteins (including AMT1 to AMT4) are predicted to be involved in AM-toxin biosynthesis since their expression ishighly up-regulated in AM-toxin-producing cultures. This is 3-isopropylmalate dehydrogenase AMT6 from Alternaria alternata (Alternaria rot fungus).